Consider the following 307-residue polypeptide: Deaminated glutathione amidase, chloroplastic/cytosolic (307 aa).

A chloroplast-targeting transit peptide spans 1–36; sequence MNAYSVSLDFTKPSLFTRITLSSQIPLTMATTVNKT. The region spanning 37-286 is the CN hydrolase domain; it reads VRVAAAQMTS…TGIVVADIDF (250 aa). The active-site Proton acceptor is the E76. K147 functions as the Proton donor in the catalytic mechanism. C188 acts as the Nucleophile in catalysis.

This sequence belongs to the nitrilase superfamily. NIT1/NIT2 family.

It is found in the plastid. It localises to the chloroplast. The protein resides in the cytoplasm. It carries out the reaction N-(4-oxoglutaryl)-L-cysteinylglycine + H2O = L-cysteinylglycine + 2-oxoglutarate. The enzyme catalyses N-(4-carboxy-4-oxobutanoyl)-L-ethylglycylglycine + H2O = N-(2-aminobutanoyl)glycine + 2-oxoglutarate. Functionally, catalyzes the hydrolysis of the amide bond in N-(4-oxoglutarate)-L-cysteinylglycine (deaminated glutathione), a metabolite repair reaction to dispose of the harmful deaminated glutathione. Possesses amidase activity toward deaminated ophthalmate in vitro. The sequence is that of Deaminated glutathione amidase, chloroplastic/cytosolic from Arabidopsis thaliana (Mouse-ear cress).